Consider the following 345-residue polypeptide: GTPase Obg (345 aa).

Positions 1–159 (MKFIDEAIIK…RTLRLELKLL (159 aa)) constitute an Obg domain. Residues 127-148 (NARFKSSTNRAPRKTTQGKPGE) form a disordered region. Positions 130 to 144 (FKSSTNRAPRKTTQG) are enriched in polar residues. The OBG-type G domain maps to 160–334 (ADVGLLGLPN…LIHAVMQYLE (175 aa)). GTP-binding positions include 166 to 173 (GLPNAGKS), 191 to 195 (FTTLH), 213 to 216 (DIPG), 284 to 287 (NKTD), and 315 to 317 (SAL). Mg(2+) is bound by residues Ser-173 and Thr-193.

This sequence belongs to the TRAFAC class OBG-HflX-like GTPase superfamily. OBG GTPase family. As to quaternary structure, monomer. Mg(2+) is required as a cofactor.

It localises to the cytoplasm. Its function is as follows. An essential GTPase which binds GTP, GDP and possibly (p)ppGpp with moderate affinity, with high nucleotide exchange rates and a fairly low GTP hydrolysis rate. Plays a role in control of the cell cycle, stress response, ribosome biogenesis and in those bacteria that undergo differentiation, in morphogenesis control. This is GTPase Obg from Nitrosococcus oceani (strain ATCC 19707 / BCRC 17464 / JCM 30415 / NCIMB 11848 / C-107).